Consider the following 217-residue polypeptide: Oxygen-insensitive NAD(P)H nitroreductase (217 aa).

10–14 (RHSTK) is an FMN binding site. NAD(+)-binding residues include Lys14, Thr41, Thr67, Asn71, Lys74, and Arg107. An FMN-binding site is contributed by Asn71. Residues 165–166 (EG) and 205–207 (KSR) each bind FMN.

The protein belongs to the nitroreductase family. In terms of assembly, homodimer. It depends on FMN as a cofactor.

Reduction of a variety of nitroaromatic compounds using NADH (and to lesser extent NADPH) as source of reducing equivalents; two electrons are transferred. The protein is Oxygen-insensitive NAD(P)H nitroreductase of Enterobacter cloacae.